A 459-amino-acid polypeptide reads, in one-letter code: Phosphomethylpyrimidine synthase (459 aa).

Substrate-binding positions include N80, M109, Y139, H175, 195–197 (SRG), 236–239 (DSLR), and E275. H279 is a binding site for Zn(2+). Position 302 (Y302) interacts with substrate. Zn(2+) is bound at residue H343. C423, C426, and C431 together coordinate [4Fe-4S] cluster.

This sequence belongs to the ThiC family. It depends on [4Fe-4S] cluster as a cofactor.

The catalysed reaction is 5-amino-1-(5-phospho-beta-D-ribosyl)imidazole + S-adenosyl-L-methionine = 4-amino-2-methyl-5-(phosphooxymethyl)pyrimidine + CO + 5'-deoxyadenosine + formate + L-methionine + 3 H(+). Its pathway is cofactor biosynthesis; thiamine diphosphate biosynthesis. Functionally, catalyzes the synthesis of the hydroxymethylpyrimidine phosphate (HMP-P) moiety of thiamine from aminoimidazole ribotide (AIR) in a radical S-adenosyl-L-methionine (SAM)-dependent reaction. The sequence is that of Phosphomethylpyrimidine synthase from Gloeothece citriformis (strain PCC 7424) (Cyanothece sp. (strain PCC 7424)).